The following is a 162-amino-acid chain: Ribosomal RNA large subunit methyltransferase H (162 aa).

Glycine 108 serves as a coordination point for S-adenosyl-L-methionine.

Belongs to the RNA methyltransferase RlmH family. Homodimer.

Its subcellular location is the cytoplasm. It catalyses the reaction pseudouridine(1915) in 23S rRNA + S-adenosyl-L-methionine = N(3)-methylpseudouridine(1915) in 23S rRNA + S-adenosyl-L-homocysteine + H(+). Its function is as follows. Specifically methylates the pseudouridine at position 1915 (m3Psi1915) in 23S rRNA. The protein is Ribosomal RNA large subunit methyltransferase H of Methylobacterium nodulans (strain LMG 21967 / CNCM I-2342 / ORS 2060).